The sequence spans 36 residues: Photosystem I reaction center subunit VIII (36 aa).

The helical transmembrane segment at 9-29 (ILVPLVGLVFPAIAMASLFLY) threads the bilayer.

The protein belongs to the PsaI family.

Its subcellular location is the plastid. It localises to the chloroplast thylakoid membrane. Its function is as follows. May help in the organization of the PsaL subunit. This is Photosystem I reaction center subunit VIII from Oltmannsiellopsis viridis (Marine flagellate).